A 136-amino-acid chain; its full sequence is Large-conductance mechanosensitive channel (136 aa).

A run of 4 helical transmembrane segments spans residues 9–29, 32–52, 54–74, and 79–99; these read AFAS…GAAF, IVSS…LGGV, FSDL…VVIA, and IQTV…LKAI.

The protein belongs to the MscL family. As to quaternary structure, homopentamer.

The protein resides in the cell inner membrane. Functionally, channel that opens in response to stretch forces in the membrane lipid bilayer. May participate in the regulation of osmotic pressure changes within the cell. The chain is Large-conductance mechanosensitive channel from Vibrio cholerae serotype O1 (strain ATCC 39541 / Classical Ogawa 395 / O395).